Reading from the N-terminus, the 618-residue chain is DNA mismatch repair protein MutL (618 aa).

Over residues 367-378 (EPTAAREPATPR) the composition is skewed to low complexity. The segment at 367–402 (EPTAAREPATPRYSGGASGGNGGRQTAGGWPHAQPG) is disordered. The span at 382-392 (GASGGNGGRQT) shows a compositional bias: gly residues.

Belongs to the DNA mismatch repair MutL/HexB family.

Functionally, this protein is involved in the repair of mismatches in DNA. It is required for dam-dependent methyl-directed DNA mismatch repair. May act as a 'molecular matchmaker', a protein that promotes the formation of a stable complex between two or more DNA-binding proteins in an ATP-dependent manner without itself being part of a final effector complex. This chain is DNA mismatch repair protein MutL, found in Salmonella choleraesuis (strain SC-B67).